Reading from the N-terminus, the 358-residue chain is Tripartite motif-containing protein 54 (358 aa).

Residues 26 to 82 (CPICLEMFSKPVVILPCQHNLCRKCANDVFQASNPLWQSRGSTTVSSGGRFRCPSCR) form an RING-type zinc finger. The segment at 121-163 (EQHLMCEEHEEEKINIYCLSCEVPTCSLCKVFGAHKDCEVAPL) adopts a B box-type zinc-finger fold. 4 residues coordinate Zn(2+): cysteine 126, histidine 129, cysteine 149, and histidine 155. The mediates microtubule-binding and homooligomerization stretch occupies residues 168-211 (KRQKSELSDGIAMLVAGNDRVQAVITQMEEVCQTIEDNSRRQKQ). Positions 220–258 (LCAVLEERKGELLQALAREQEEKLQRVRGLIRQYGDHLE) form a coiled coil. Residues 271–329 (MEEPQMALYLQQAKELINKVGAMSKVELAGRPEPGYESMEQFTVRVEHVAEMLRTIDFQ) enclose the COS domain. The disordered stretch occupies residues 326 to 358 (IDFQPGASGEEEEVAPDGEEGSAGPEEERPDGP). A compositionally biased stretch (acidic residues) spans 334-345 (GEEEEVAPDGEE).

In terms of assembly, homooligomer and heterooligomer. Interacts with tubulin. Interacts with TRIM63 and probably with TRIM55. Specifically expressed in heart and skeletal muscle.

It is found in the cytoplasm. Its subcellular location is the cytoskeleton. The protein resides in the myofibril. The protein localises to the sarcomere. It localises to the z line. Functionally, may bind and stabilize microtubules during myotubes formation. This Homo sapiens (Human) protein is Tripartite motif-containing protein 54 (TRIM54).